The following is a 253-amino-acid chain: 5'/3'-nucleotidase SurE (253 aa).

Residues D8, D9, S39, and N92 each coordinate a divalent metal cation.

Belongs to the SurE nucleotidase family. Requires a divalent metal cation as cofactor.

The protein resides in the cytoplasm. It carries out the reaction a ribonucleoside 5'-phosphate + H2O = a ribonucleoside + phosphate. The enzyme catalyses a ribonucleoside 3'-phosphate + H2O = a ribonucleoside + phosphate. It catalyses the reaction [phosphate](n) + H2O = [phosphate](n-1) + phosphate + H(+). Its function is as follows. Nucleotidase with a broad substrate specificity as it can dephosphorylate various ribo- and deoxyribonucleoside 5'-monophosphates and ribonucleoside 3'-monophosphates with highest affinity to 3'-AMP. Also hydrolyzes polyphosphate (exopolyphosphatase activity) with the preference for short-chain-length substrates (P20-25). Might be involved in the regulation of dNTP and NTP pools, and in the turnover of 3'-mononucleotides produced by numerous intracellular RNases (T1, T2, and F) during the degradation of various RNAs. The sequence is that of 5'/3'-nucleotidase SurE from Salmonella paratyphi B (strain ATCC BAA-1250 / SPB7).